We begin with the raw amino-acid sequence, 460 residues long: Phosphoglucosamine mutase (460 aa).

Residue S102 is the Phosphoserine intermediate of the active site. Residues S102, D241, D243, and D245 each coordinate Mg(2+). The residue at position 102 (S102) is a Phosphoserine.

This sequence belongs to the phosphohexose mutase family. Mg(2+) serves as cofactor. Post-translationally, activated by phosphorylation.

The enzyme catalyses alpha-D-glucosamine 1-phosphate = D-glucosamine 6-phosphate. Catalyzes the conversion of glucosamine-6-phosphate to glucosamine-1-phosphate. This is Phosphoglucosamine mutase from Verminephrobacter eiseniae (strain EF01-2).